A 762-amino-acid polypeptide reads, in one-letter code: Putative cation exchanger YDL206W (762 aa).

Positions 1–26 are cleaved as a signal peptide; it reads MHKPLRWLITIAFYVSNVILIGYSLS. Topologically, residues 27–30 are extracellular; that stretch reads SNGS. A glycan (N-linked (GlcNAc...) asparagine) is linked at Asn-28. Residues 31 to 51 traverse the membrane as a helical segment; sequence ISEFYLHSVVLIECFSLLGVV. Residues 52-102 are Cytoplasmic-facing; the sequence is TSDCLTPSLSYISSNIFHISDRVSGMTLLALGNALPDITSTYQSMKSGVTS. A helical transmembrane segment spans residues 103 to 123; sequence LAIGELFGGIFFLLTVVIGLM. Topologically, residues 124–156 are extracellular; that stretch reads GCVATIQFQHDKSIETYTEESFDQNLSYDRSNY. N-linked (GlcNAc...) asparagine glycosylation occurs at Asn-148. A helical transmembrane segment spans residues 157 to 177; that stretch reads ILDVGIFTFMLLVSGTFLADG. Arg-178 is a topological domain (cytoplasmic). The chain crosses the membrane as a helical span at residues 179–199; the sequence is LYFWECIVMVLTYCCCAVYLI. Residues 200–501 are Extracellular-facing; that stretch reads KSYKYPCEIN…YNYLTDVSLE (302 aa). Asn-280 and Asn-329 each carry an N-linked (GlcNAc...) asparagine glycan. The chain crosses the membrane as a helical span at residues 502-522; the sequence is IGFFEFLSLLVTTPVSIILYL. Over 523-554 the chain is Cytoplasmic; sequence SIPSEISQTDHDLPLSYLQNIQLIASPIILNQ. Residues 555–575 traverse the membrane as a helical segment; the sequence is LITNNFSFWLLILSLVIAILL. Residues 576–589 lie on the Extracellular side of the membrane; that stretch reads YFKTRTIPNKFNSD. The chain crosses the membrane as a helical span at residues 590 to 610; sequence IIFTVAFLLSLACLSKAVHII. The Cytoplasmic segment spans residues 611–615; it reads VVTLT. A helical transmembrane segment spans residues 616–636; the sequence is HWINVFNISETILGLTIFTWG. Residues 637–650 lie on the Extracellular side of the membrane; the sequence is NSIGDLVSNITFVK. An N-linked (GlcNAc...) asparagine glycan is attached at Asn-645. Residues 651 to 671 form a helical membrane-spanning segment; it reads IGVLEIAIGACFGSPLLYFLF. Over 672–709 the chain is Cytoplasmic; that stretch reads GVGFDGIMIMLGDKTGKIVSGRDSNILMHHIDFKVDKN. Residues 710 to 730 traverse the membrane as a helical segment; it reads LINTGVGILIAFLIFTVLIPL. The Extracellular segment spans residues 731 to 738; sequence NDWKIDKK. A helical membrane pass occupies residues 739–759; the sequence is ISIALLTLYIVVTCISVFLEV. Residues 760-762 lie on the Cytoplasmic side of the membrane; the sequence is HQV.

The protein belongs to the Ca(2+):cation antiporter (CaCA) (TC 2.A.19) family.

The protein resides in the membrane. In terms of biological role, putative cation exchanger. The sequence is that of Putative cation exchanger YDL206W from Saccharomyces cerevisiae (strain ATCC 204508 / S288c) (Baker's yeast).